A 313-amino-acid polypeptide reads, in one-letter code: Pyrimidine-specific ribonucleoside hydrolase RihB (313 aa).

Aspartate 11 acts as the Proton acceptor in catalysis. Ca(2+) contacts are provided by aspartate 11, aspartate 16, and valine 124. Substrate contacts are provided by glutamine 227 and histidine 239. Aspartate 240 serves as a coordination point for Ca(2+).

The protein belongs to the IUNH family. RihB subfamily. In terms of assembly, homotetramer. The cofactor is Ca(2+).

The catalysed reaction is a pyrimidine ribonucleoside + H2O = a pyrimidine nucleobase + D-ribose. Hydrolyzes cytidine or uridine to ribose and cytosine or uracil, respectively. Has a clear preference for cytidine over uridine. Strictly specific for ribonucleosides. This is Pyrimidine-specific ribonucleoside hydrolase RihB from Escherichia coli O1:K1 / APEC.